Consider the following 354-residue polypeptide: DNA integrity scanning protein DisA (354 aa).

The DAC domain maps to 6–144; that stretch reads DDELKKILKI…GDIKYVLRDS (139 aa). ATP is bound by residues G73, L91, and 104-108; that span reads TRHRT.

Belongs to the DisA family. In terms of assembly, homooctamer. Mg(2+) serves as cofactor.

The catalysed reaction is 2 ATP = 3',3'-c-di-AMP + 2 diphosphate. Participates in a DNA-damage check-point that is active prior to asymmetric division when DNA is damaged. DisA forms globular foci that rapidly scan along the chromosomes during sporulation, searching for lesions. When a lesion is present, DisA pauses at the lesion site. This triggers a cellular response that culminates in a temporary block in sporulation initiation. Its function is as follows. Also has diadenylate cyclase activity, catalyzing the condensation of 2 ATP molecules into cyclic di-AMP (c-di-AMP). c-di-AMP acts as a signaling molecule that couples DNA integrity with progression of sporulation. The rise in c-di-AMP level generated by DisA while scanning the chromosome, operates as a positive signal that advances sporulation; upon encountering a lesion, the DisA focus arrests at the damaged site and halts c-di-AMP synthesis. The protein is DNA integrity scanning protein DisA of Clostridium perfringens (strain 13 / Type A).